Here is a 240-residue protein sequence, read N- to C-terminus: MSVLFISDLHLEAERPDITRAFLSFLDERARRAEALYILGDFFEAWIGDDGMDAFQHSIASALRQVADGGTRLYLMHGNRDFLIGQAFCREAGCTLLPDPSVIDLYGEPVLLMHGDSLCTRDEAYMRLRRWLRNPLTLWVLRHLPLATRHKLARKLRKESRAQTRMKAVDIIDVTPDEVPLAMRRHGVRTLIHGHTHRPAEHALEVDGQPARRIVLGDWDRQGWALEIDANGHRQAPFPL.

Mn(2+) contacts are provided by Asp8, His10, Asp41, Asn79, and His114. 79–80 (NR) lines the substrate pocket. Residues Asp122, Ser160, Thr164, Lys167, and His195 each contribute to the substrate site. Residues His195 and His197 each contribute to the Mn(2+) site.

The protein belongs to the LpxH family. Mn(2+) is required as a cofactor.

It is found in the cell inner membrane. The catalysed reaction is UDP-2-N,3-O-bis[(3R)-3-hydroxytetradecanoyl]-alpha-D-glucosamine + H2O = 2-N,3-O-bis[(3R)-3-hydroxytetradecanoyl]-alpha-D-glucosaminyl 1-phosphate + UMP + 2 H(+). The protein operates within glycolipid biosynthesis; lipid IV(A) biosynthesis; lipid IV(A) from (3R)-3-hydroxytetradecanoyl-[acyl-carrier-protein] and UDP-N-acetyl-alpha-D-glucosamine: step 4/6. Hydrolyzes the pyrophosphate bond of UDP-2,3-diacylglucosamine to yield 2,3-diacylglucosamine 1-phosphate (lipid X) and UMP by catalyzing the attack of water at the alpha-P atom. Involved in the biosynthesis of lipid A, a phosphorylated glycolipid that anchors the lipopolysaccharide to the outer membrane of the cell. The protein is UDP-2,3-diacylglucosamine hydrolase of Pseudomonas paraeruginosa (strain DSM 24068 / PA7) (Pseudomonas aeruginosa (strain PA7)).